Reading from the N-terminus, the 860-residue chain is SH2 domain-containing protein 3C (860 aa).

S22 is modified (phosphoserine). Disordered stretches follow at residues 51-117 (EATQ…PPGL) and 130-180 (PLED…PEAG). Over residues 162–175 (ERPPRDVHSERAAG) the composition is skewed to basic and acidic residues. One can recognise an SH2 domain in the interval 220 to 319 (WYHGRIPREV…QSGAIIYCPV (100 aa)). Phosphotyrosine occurs at positions 278 and 283. The disordered stretch occupies residues 335-537 (GQGSSKPASP…LSENGAPEGD (203 aa)). The residue at position 359 (S359) is a Phosphoserine. 3 stretches are compositionally biased toward low complexity: residues 405–420 (SPMS…PAYS), 427–443 (AAPA…SPVA), and 479–490 (SPSPSLSSYSDP). The residue at position 440 (S440) is a Phosphoserine. The Ras-GEF domain occupies 586–854 (DARTLARHVT…TALSHKLEPA (269 aa)). Position 793 is a phosphotyrosine (Y793).

Component of a complex comprised of SH2D3C, BCAR1/CAS, and CRK. Within the complex, interacts with CRK and (via C-terminus) with BCAR1/CAS (via C-terminus). Interacts with NEDD9/HEF1. Interacts with EPHB2. In terms of assembly, interacts with NEDD9/HEF1. Interacts with BCAR1/CAS. Interacts with PTK2B. As to quaternary structure, interacts (via C-terminus) with BCAR1/CAS (via C-terminus). Interacts with IGF1. In terms of processing, phosphorylated by MAPK/ERK upon T-cell receptor stimulation in T-cells. In terms of tissue distribution, ubiquitously expressed.

Its subcellular location is the cytoplasm. The protein resides in the cell membrane. It localises to the cell projection. It is found in the axon. The protein localises to the ruffle membrane. Functionally, acts as an adapter protein that mediates cell signaling pathways involved in cellular functions such as cell adhesion and migration, tissue organization, and the regulation of the immune response. Plays a role in integrin-mediated cell adhesion through BCAR1-CRK-RAPGEF1 signaling and activation of the small GTPase RAP1. Promotes cell migration and invasion through the extracellular matrix. Required for marginal zone B-cell development and thymus-independent type 2 immune responses. Mediates migration and adhesion of B cells in the splenic marginal zone via promoting hyperphosphorylation of NEDD9/CASL. Plays a role in CXCL13-induced chemotaxis of B-cells. Plays a role in the migration of olfactory sensory neurons (OSNs) into the forebrain and the innervation of the olfactory bulb by the OSN axons during development. Required for the efficient tyrosine phosphorylation of BCAR1 in OSN axons. Important regulator of chemokine-induced, integrin-mediated T lymphocyte adhesion and migration, acting upstream of RAP1. Required for tissue-specific adhesion of T lymphocytes to peripheral tissues. Required for basal and CXCL2 stimulated serine-threonine phosphorylation of NEDD9. May be involved in the regulation of T-cell receptor-mediated IL2 production through the activation of the JNK pathway in T-cells. Its function is as follows. May be involved in the BCAR1/CAS-mediated JNK activation pathway. The polypeptide is SH2 domain-containing protein 3C (SH2D3C) (Homo sapiens (Human)).